Here is a 315-residue protein sequence, read N- to C-terminus: MHGHGGYDSDFSDDERCGESSKRKKRTVEDDLLLQKPFQKEKHGKVAHKQVAAELLDREEARNRRFHLIAMDAYQRHTKFVNDYILYYGGKKEDFKRLGENDKTDLDVIRENHRFLWNEEDEMDMTWEKRLAKKYYDKLFKEYCIADLSKYKENKFGFRWRVEKEVISGKGQFFCGNKYCDKKEGLKSWEVNFGYIEHGEKRNALVKLRLCQECSIKLNFHHRRKEIKSKKRKDKTKKDCEESSHKKSRLSSAEEASKKKDKGHSSSKKSEDSLLRNSDEEESASESELWKGPLPETDEKSQEEEFDEYFQDLFL.

M1 bears the N-acetylmethionine mark. The disordered stretch occupies residues M1–V28. Phosphoserine occurs at positions 9 and 12. N6-acetyllysine is present on K36. Positions E226 to K235 are enriched in basic residues. The disordered stretch occupies residues E226–L315. Residues T236–H245 show a composition bias toward basic and acidic residues. Residues S251, S252, S278, S283, and S285 each carry the phosphoserine modification. A compositionally biased stretch (basic and acidic residues) spans K268 to S278. Acidic residues predominate over residues S301–L315.

Interacts with ESS2. As to expression, ubiquitously expressed with higher expression in brain, heart, skeletal muscle, kidney and liver.

Its subcellular location is the nucleus. Functionally, may be involved in pre-mRNA splicing. This chain is Protein FRA10AC1 (FRA10AC1), found in Homo sapiens (Human).